Reading from the N-terminus, the 511-residue chain is MKKRALVSVSDKTGVVEFVKGLLEQGIEVISTGGTKKLLEENGLQVIGISEVTGFPEIMDGRVKTLHPNIHGGLLAVRDNETHVAQMNELGMEPIDFVIVNLYPFKETIAKPDVTFADAIENIDIGGPTMIRSAAKNHKFVSVIVDPVDYDVVLAELKVNGEVKEETKRKLAAKVFRHTAAYDALISNYLTEQMGEESPETLTVTFEKKQDLRYGENPHQTATFYKAPFAVTSSVAYAEQLHGKELSYNNINDADAALSIVKEFTEPAVVAVKHMNPCGVGVGTDIHEAYTRAYEADPVSIFGGIIAANREIDKATAEKLHEIFLEIIIAPSFSKEALEVLQSKKNLRLLTVNIEKATSASKKLTSVQGGLLVQEEDTLSLDESTISIPTKREPSEQEWKDLKLAWKVVKHVKSNAIVLAKDDMTIGVGAGQMNRVGSAKIAITQAGEKAQGSALASDAFFPMPDTLEEAAKAGITAIIQPGGSIRDEDSIKVADTYGIAMVFTGVRHFKH.

Residues 1-145 enclose the MGS-like domain; that stretch reads MKKRALVSVS…KNHKFVSVIV (145 aa).

It belongs to the PurH family.

The catalysed reaction is (6R)-10-formyltetrahydrofolate + 5-amino-1-(5-phospho-beta-D-ribosyl)imidazole-4-carboxamide = 5-formamido-1-(5-phospho-D-ribosyl)imidazole-4-carboxamide + (6S)-5,6,7,8-tetrahydrofolate. It catalyses the reaction IMP + H2O = 5-formamido-1-(5-phospho-D-ribosyl)imidazole-4-carboxamide. Its pathway is purine metabolism; IMP biosynthesis via de novo pathway; 5-formamido-1-(5-phospho-D-ribosyl)imidazole-4-carboxamide from 5-amino-1-(5-phospho-D-ribosyl)imidazole-4-carboxamide (10-formyl THF route): step 1/1. The protein operates within purine metabolism; IMP biosynthesis via de novo pathway; IMP from 5-formamido-1-(5-phospho-D-ribosyl)imidazole-4-carboxamide: step 1/1. The sequence is that of Bifunctional purine biosynthesis protein PurH from Bacillus cereus (strain ZK / E33L).